Reading from the N-terminus, the 381-residue chain is tRNA pseudouridine synthase D (381 aa).

Asp-81 functions as the Nucleophile in the catalytic mechanism. A TRUD domain is found at 160–335 (GMPNYFGSQR…TLGSRRFFWV (176 aa)).

The protein belongs to the pseudouridine synthase TruD family.

The enzyme catalyses uridine(13) in tRNA = pseudouridine(13) in tRNA. Its function is as follows. Responsible for synthesis of pseudouridine from uracil-13 in transfer RNAs. This is tRNA pseudouridine synthase D from Helicobacter pylori (strain J99 / ATCC 700824) (Campylobacter pylori J99).